Consider the following 131-residue polypeptide: Small ribosomal subunit protein uS8 (131 aa).

Belongs to the universal ribosomal protein uS8 family. Part of the 30S ribosomal subunit. Contacts proteins S5 and S12.

In terms of biological role, one of the primary rRNA binding proteins, it binds directly to 16S rRNA central domain where it helps coordinate assembly of the platform of the 30S subunit. The polypeptide is Small ribosomal subunit protein uS8 (Helicobacter acinonychis (strain Sheeba)).